Consider the following 254-residue polypeptide: NADPH-dependent ferric-chelate reductase (254 aa).

Residues 15–136 (LRFRELTVLR…AGPRGSLVVP (122 aa)) enclose the FAD-binding FR-type domain.

The protein belongs to the SIP oxidoreductase family.

The protein localises to the cytoplasm. It catalyses the reaction 2 a Fe(II)-siderophore + NADP(+) + H(+) = 2 a Fe(III)-siderophore + NADPH. Plays a role in iron homeostasis under excess nickel conditions. In Escherichia coli (strain K12), this protein is NADPH-dependent ferric-chelate reductase (yqjH).